A 475-amino-acid polypeptide reads, in one-letter code: Putative poly(A) polymerase catalytic subunit (475 aa).

Belongs to the poxviridae poly(A) polymerase catalytic subunit family. Highly divergent.

The protein resides in the virion. It carries out the reaction RNA(n) + ATP = RNA(n)-3'-adenine ribonucleotide + diphosphate. Polymerase that creates the 3'-poly(A) tail of mRNA's. This African swine fever virus (isolate Tick/South Africa/Pretoriuskop Pr4/1996) (ASFV) protein is Putative poly(A) polymerase catalytic subunit.